A 603-amino-acid polypeptide reads, in one-letter code: Prostaglandin G/H synthase 1 (603 aa).

The N-terminal stretch at 1 to 27 (MSRGSRLHRWPLLLLLLLLLPPPPVLP) is a signal peptide. An EGF-like domain is found at 35–73 (PVNPCCYYPCQHQGICVRFGLDRYQCDCTRTGYSGPNCT). 4 disulfides stabilise this stretch: Cys-39–Cys-50, Cys-40–Cys-162, Cys-44–Cys-60, and Cys-62–Cys-72. Asn-71, Asn-107, and Asn-147 each carry an N-linked (GlcNAc...) asparagine glycan. His-210 (proton acceptor) is an active-site residue. The active-site For cyclooxygenase activity is the Tyr-388. His-391 provides a ligand contact to heme b. Cys-572 and Cys-578 are joined by a disulfide.

Belongs to the prostaglandin G/H synthase family. As to quaternary structure, homodimer. It depends on heme b as a cofactor. N-glycosylated. N-linked glycosylation is necessary for enzymatic activity. In terms of tissue distribution, brain cortex. Isoform 2 is expressed in the cerebral cortex and heart.

The protein resides in the microsome membrane. Its subcellular location is the endoplasmic reticulum membrane. It carries out the reaction (5Z,8Z,11Z,14Z)-eicosatetraenoate + AH2 + 2 O2 = prostaglandin H2 + A + H2O. It catalyses the reaction (5Z,8Z,11Z,14Z)-eicosatetraenoate + 2 O2 = prostaglandin G2. The catalysed reaction is prostaglandin G2 + AH2 = prostaglandin H2 + A + H2O. The enzyme catalyses (9Z,12Z)-octadecadienoate + AH2 + O2 = (9R)-hydroxy-(10E,12Z)-octadecadienoate + A + H2O. It carries out the reaction (9Z,12Z)-octadecadienoate + AH2 + O2 = (9S)-hydroxy-(10E,12Z)-octadecadienoate + A + H2O. It catalyses the reaction (9Z,12Z)-octadecadienoate + AH2 + O2 = (13S)-hydroxy-(9Z,11E)-octadecadienoate + A + H2O. The catalysed reaction is (9Z,12Z)-octadecadienoate + AH2 + O2 = (13R)-hydroxy-(9Z,11E)-octadecadienoate + A + H2O. The protein operates within lipid metabolism; prostaglandin biosynthesis. With respect to regulation, the cyclooxygenase activity is inhibited by nonsteroidal anti-inflammatory drugs (NSAIDs) including ibuprofen, flurbiprofen, ketoprofen, naproxen, flurbiprofen, anirolac, fenclofenac and diclofenac. Dual cyclooxygenase and peroxidase that plays an important role in the biosynthesis pathway of prostanoids, a class of C20 oxylipins mainly derived from arachidonate ((5Z,8Z,11Z,14Z)-eicosatetraenoate, AA, C20:4(n-6)), with a particular role in the inflammatory response. The cyclooxygenase activity oxygenates AA to the hydroperoxy endoperoxide prostaglandin G2 (PGG2), and the peroxidase activity reduces PGG2 to the hydroxy endoperoxide prostaglandin H2 (PGH2), the precursor of all 2-series prostaglandins and thromboxanes. This complex transformation is initiated by abstraction of hydrogen at carbon 13 (with S-stereochemistry), followed by insertion of molecular O2 to form the endoperoxide bridge between carbon 9 and 11 that defines prostaglandins. The insertion of a second molecule of O2 (bis-oxygenase activity) yields a hydroperoxy group in PGG2 that is then reduced to PGH2 by two electrons. Involved in the constitutive production of prostanoids in particular in the stomach and platelets. In gastric epithelial cells, it is a key step in the generation of prostaglandins, such as prostaglandin E2 (PGE2), which plays an important role in cytoprotection. In platelets, it is involved in the generation of thromboxane A2 (TXA2), which promotes platelet activation and aggregation, vasoconstriction and proliferation of vascular smooth muscle cells. Can also use linoleate (LA, (9Z,12Z)-octadecadienoate, C18:2(n-6)) as substrate and produce hydroxyoctadecadienoates (HODEs) in a regio- and stereospecific manner, being (9R)-HODE ((9R)-hydroxy-(10E,12Z)-octadecadienoate) and (13S)-HODE ((13S)-hydroxy-(9Z,11E)-octadecadienoate) its major products. This Canis lupus familiaris (Dog) protein is Prostaglandin G/H synthase 1 (PTGS1).